Reading from the N-terminus, the 316-residue chain is Initiation factor TFIIB homolog (316 aa).

It belongs to the asfivirus C315R family.

Putative initation factor. This is Initiation factor TFIIB homolog from Ornithodoros (relapsing fever ticks).